Reading from the N-terminus, the 321-residue chain is Methionyl-tRNA formyltransferase (321 aa).

Serine 111 to proline 114 contacts (6S)-5,6,7,8-tetrahydrofolate.

Belongs to the Fmt family.

It carries out the reaction L-methionyl-tRNA(fMet) + (6R)-10-formyltetrahydrofolate = N-formyl-L-methionyl-tRNA(fMet) + (6S)-5,6,7,8-tetrahydrofolate + H(+). Its function is as follows. Attaches a formyl group to the free amino group of methionyl-tRNA(fMet). The formyl group appears to play a dual role in the initiator identity of N-formylmethionyl-tRNA by promoting its recognition by IF2 and preventing the misappropriation of this tRNA by the elongation apparatus. The sequence is that of Methionyl-tRNA formyltransferase from Bifidobacterium animalis subsp. lactis (strain AD011).